Reading from the N-terminus, the 414-residue chain is Ornithine aminotransferase (414 aa).

An intrachain disulfide couples C154 to C163. An N6-(pyridoxal phosphate)lysine modification is found at K262.

The protein belongs to the class-III pyridoxal-phosphate-dependent aminotransferase family. In terms of assembly, homodimer. Requires pyridoxal 5'-phosphate as cofactor. Post-translationally, the disulfide bond between Cys-154 and Cys-163 is reduced by TRX1 which increases OAT catalytic activity.

The protein localises to the cytoplasm. It catalyses the reaction a 2-oxocarboxylate + L-ornithine = L-glutamate 5-semialdehyde + an L-alpha-amino acid. The catalysed reaction is L-ornithine + 2-oxoglutarate = L-glutamate 5-semialdehyde + L-glutamate. It participates in amino-acid biosynthesis; L-proline biosynthesis; L-glutamate 5-semialdehyde from L-ornithine: step 1/1. With respect to regulation, unlike for mammalian OATs, activity is increased by TRX1-mediated reduction of the disulfide bond between Cys-154 and Cys-163. Binding to TRX1 may also induce conformational changes that facilitate substrate binding. Its function is as follows. The enzyme has a very narrow substrate specificity and can only catalyze the transamination of alpha-ketoglutarate with ornithine or N-acetylornithine and, to a lesser extent, of glutamate-5-semialdehyde with glutamate and alanine. The polypeptide is Ornithine aminotransferase (Plasmodium falciparum (isolate 3D7)).